We begin with the raw amino-acid sequence, 71 residues long: Large ribosomal subunit protein bL31 (71 aa).

The Zn(2+) site is built by cysteine 16, cysteine 18, cysteine 38, and cysteine 41.

It belongs to the bacterial ribosomal protein bL31 family. Type A subfamily. As to quaternary structure, part of the 50S ribosomal subunit. It depends on Zn(2+) as a cofactor.

Binds the 23S rRNA. This chain is Large ribosomal subunit protein bL31, found in Francisella tularensis subsp. novicida (strain U112).